The sequence spans 1318 residues: Tetratricopeptide repeat protein 41 (1318 aa).

TPR repeat units lie at residues 401 to 434 (PRLE…KPCI), 653 to 686 (WIQE…PVRE), 819 to 852 (GRII…LLQS), 860 to 893 (LRAQ…LLRF), 993 to 1029 (MEFL…KEKA), and 1047 to 1084 (SDTL…RAAH). Positions 1295–1318 (KPGFPRRSQIESKLLKTSDDPNKE) are disordered. Over residues 1302–1318 (SQIESKLLKTSDDPNKE) the composition is skewed to basic and acidic residues.

Highly expressed in lung and myeloid leukemia cell line (at protein level). Isoform 4: expressed in heart (at protein level).

It is found in the cytoplasm. This Mus musculus (Mouse) protein is Tetratricopeptide repeat protein 41.